The chain runs to 285 residues: Bifunctional protein FolD (285 aa).

NADP(+) contacts are provided by residues 165 to 167 (GRG), T192, and V233.

Belongs to the tetrahydrofolate dehydrogenase/cyclohydrolase family. As to quaternary structure, homodimer.

The catalysed reaction is (6R)-5,10-methylene-5,6,7,8-tetrahydrofolate + NADP(+) = (6R)-5,10-methenyltetrahydrofolate + NADPH. It catalyses the reaction (6R)-5,10-methenyltetrahydrofolate + H2O = (6R)-10-formyltetrahydrofolate + H(+). The protein operates within one-carbon metabolism; tetrahydrofolate interconversion. Catalyzes the oxidation of 5,10-methylenetetrahydrofolate to 5,10-methenyltetrahydrofolate and then the hydrolysis of 5,10-methenyltetrahydrofolate to 10-formyltetrahydrofolate. This Corynebacterium jeikeium (strain K411) protein is Bifunctional protein FolD.